A 1649-amino-acid chain; its full sequence is Formin-like protein 20 (1649 aa).

Positions 1 to 194 (MALFRRFFYK…QYISRRNLGS (194 aa)) constitute a Phosphatase tensin-type domain. The active-site Phosphocysteine intermediate is the C127. Residues 200–339 (DTPLLLDCLI…FKAEVLFSGA (140 aa)) form the C2 tensin-type domain. 2 disordered regions span residues 416-774 (DCAS…PWKS) and 787-1245 (STSQ…QKKS). The span at 421 to 483 (DSNHKHDMHA…RRTVEAKEND (63 aa)) shows a compositional bias: basic and acidic residues. Polar residues-rich tracts occupy residues 500–513 (LESM…SLNK) and 585–597 (RINS…TTSL). Positions 598-616 (KDGKRATSPDGVIPKDAKT) are enriched in basic and acidic residues. Positions 648 to 662 (SLPPASPHQAPPPLP) are enriched in pro residues. The span at 665–678 (TSEAKTVLHSSQAV) shows a compositional bias: polar residues. Pro residues-rich tracts occupy residues 680-691 (SPPPPPPPPPLP), 701-711 (LPPPPPPPPPF), 722-732 (LPPPPPPPPPF), 743-752 (LPPPPPPPLP), and 795-804 (SPTPPPPPPA). Residues 809–820 (GQKSSDLQTSQL) show a composition bias toward polar residues. Composition is skewed to pro residues over residues 821 to 832 (PSPPPPPPPPPF), 843 to 854 (LPPPPPPPPPPF), and 865 to 874 (LPPPPPPPPW). Positions 878–890 (YASTFETHEACST) are enriched in polar residues. Pro residues-rich tracts occupy residues 893 to 904 (SPPPPPPPPPFS), 944 to 960 (PSPP…PPPF), and 968 to 1213 (SPPP…PPPM). In terms of domain architecture, FH2 spans 1237 to 1635 (FGSAAQKKSS…KALKEAEMEK (399 aa)).

It belongs to the formin-like family. Class-II subfamily.

The polypeptide is Formin-like protein 20 (FH20) (Arabidopsis thaliana (Mouse-ear cress)).